The chain runs to 184 residues: Homeobox protein LOX10 (184 aa).

2 disordered regions span residues 1-29 (KIVSRWMGSQNNHQQTHPNHHHHLPPLQH) and 129-184 (YKTK…NKPG). The segment at residues 76–135 (RRKRRILFSQAQIYELERRFRQQKYLSAPEREHLATFIGLTPTQVKIWFQNHRYKTKKSK) is a DNA-binding region (homeobox). Composition is skewed to low complexity over residues 140 to 161 (NSPSSSSMTSSSSASNKVASTT) and 174 to 184 (SNTTNNNNKPG).

Belongs to the NK-2 homeobox family. Expressed in a segmental pattern in the endoderm and in the cephalic nervous system.

Its subcellular location is the nucleus. In terms of biological role, may play a role in patterning the gut. The protein is Homeobox protein LOX10 (LOX10) of Helobdella triserialis (Leech).